Consider the following 178-residue polypeptide: Zinc finger CCHC domain-containing protein 10 (178 aa).

Residues 21–38 form a CCHC-type zinc finger; the sequence is VRCQKCLEFGHWTYECKG. A disordered region spans residues 66 to 178; it reads QSIGETNIEK…EPQKKKKKKK (113 aa). Composition is skewed to low complexity over residues 85 to 113 and 121 to 164; these read SVTS…SSSS and SLSS…SSES.

The polypeptide is Zinc finger CCHC domain-containing protein 10 (Zcchc10) (Mus musculus (Mouse)).